We begin with the raw amino-acid sequence, 1143 residues long: ATP-dependent helicase/deoxyribonuclease subunit B (1143 aa).

The UvrD-like helicase ATP-binding domain maps to 1-274; sequence MNYMHLGRAG…YGQTVKFQST (274 aa). 7 to 14 contributes to the ATP binding site; sequence GRAGTGKT. Positions 267–565 constitute a UvrD-like helicase C-terminal domain; it reads QTVKFQSTGL…RFSLVPPSLD (299 aa). [4Fe-4S] cluster is bound by residues Cys782, Cys1104, Cys1107, and Cys1113.

Belongs to the helicase family. AddB/RexB type 1 subfamily. Heterodimer of AddA and AddB. The cofactor is Mg(2+). [4Fe-4S] cluster serves as cofactor.

In terms of biological role, the heterodimer acts as both an ATP-dependent DNA helicase and an ATP-dependent, dual-direction single-stranded exonuclease. Recognizes the chi site generating a DNA molecule suitable for the initiation of homologous recombination. The AddB subunit has 5' -&gt; 3' nuclease activity but not helicase activity. The sequence is that of ATP-dependent helicase/deoxyribonuclease subunit B from Exiguobacterium sibiricum (strain DSM 17290 / CCUG 55495 / CIP 109462 / JCM 13490 / 255-15).